The primary structure comprises 1057 residues: MDWHSFRIAALLLTSLVVLEVNSEFQIQVRDHNAKNGTIKWHSIRRQKREWIKFAAACREGEDNSKRNPIAKIHSDCAANQPVTYRISGVGIDQPPYGIFIINQKTGEINITSIVDREVTPFFIIYCRALNAQGQDLENPLELRVRVMDINDNPPVFSMTTFLGQIEENSNANTLVMKLNATDADEPNNLNSMIAFKIIRQEPSDSPMFIINRKTGEIRTMNNFLDREQYSQYSLVVRGSDRDGGADGMSAESECSITILDVNDNIPYLEQSSYDITIEENALHSQLVQIRVIDLDEEFSDNWKAIIFFISGNEGNWFEIEMNERTNVGTLKVVKPLDYEAMKNLQLSIGVRNVAEFHQSIISQYRLTATMVTVTVLNVIEGSVFRPGSKTFVVDSRMEANHRVGEFVATDLDTGRASTNVRYEMGNNPENLLVVDSRTGIITLRNRVTMEQYQRLNGEYKGTVLSIDDSLQRTCTGTIVIELSGTGWVTGSESGGSSSGSGDDRDRVTNGYQGTSSTENPQRVTGSWGGSGIDGTRPNTNPFQGDPDETLETPLYGDNVHFGPAGIGLLIMGFLVLGLVPFLLICCDCGGAPGGGAGFEPVPECSDGAIHTWAVEGPQPEPHEGITTICVPQMPPGNANVIEYIDNSGVYTNEYCGREMQDLGGGERTTGFELMDGVKTSAAPEICQEYSGTLRRNSMRECRDGGLNMNFMESYFCQKAYAYADEDEGRPSNDCLLIYDIEGVGSPAGSVGCCSFIGEDLDESFLDTLGPKFKKLADISLGKEIDSYPDSDPSWPPQSTEPMCPQHTEPLGSGHPPISPHFGTTTVISENAYHSGPGVQHPVPIPDPLGYGNVTVRESYTTSGTLKPSVHFHDNQQASNVVVTERVVGPISGADLHGMLEIPDLRGGANVIVTERVIAPGSSLPTSLTIPNPQETSNVVVTERVIQPTSGMIGNLSMTPELSSAHNVIVTERVVSGAGMSEIAGTAGLGGVGGIGSSGLVSTTMGASGTGLNMGGTATIGHMRSSSDHHFSQTVGSASPSMARSRITKYNTVQYSK.

The signal sequence occupies residues 1-23 (MDWHSFRIAALLLTSLVVLEVNS). The propeptide occupies 24-49 (EFQIQVRDHNAKNGTIKWHSIRRQKR). 4 Cadherin domains span residues 50-157 (EWIK…PPVF), 158-269 (SMTT…IPYL), 270-389 (EQSS…RPGS), and 386-493 (RPGS…TGSE). Residues 50-564 (EWIKFAAACR…LYGDNVHFGP (515 aa)) are Extracellular-facing. N110 and N180 each carry an N-linked (GlcNAc...) asparagine glycan. A disordered region spans residues 490 to 552 (TGSESGGSSS…FQGDPDETLE (63 aa)). Over residues 510-525 (NGYQGTSSTENPQRVT) the composition is skewed to polar residues. The chain crosses the membrane as a helical span at residues 565-585 (AGIGLLIMGFLVLGLVPFLLI). The Cytoplasmic segment spans residues 586-1057 (CCDCGGAPGG…TKYNTVQYSK (472 aa)). 5 Desmoglein repeat repeats span residues 832-858 (AYHS…TVRE), 859-888 (SYTT…ERVV), 889-918 (GPIS…ERVI), 919-946 (APGS…ERVI), and 947-975 (QPTS…ERVV).

Binds to JUP/plakoglobin. Interacts with PKP2. Interacts with DSC3; there is evidence to suggest that the interaction promotes cell-cell adhesion of keratinocytes. Expressed in testis.

The protein localises to the cell membrane. It localises to the cell junction. The protein resides in the desmosome. It is found in the cytoplasm. Its subcellular location is the nucleus. Component of intercellular desmosome junctions. Involved in the interaction of plaque proteins and intermediate filaments mediating cell-cell adhesion. In Mus musculus (Mouse), this protein is Desmoglein-1-alpha (Dsg1a).